The chain runs to 305 residues: Sodium/potassium-transporting ATPase subunit beta-1 (305 aa).

Residues 1-32 (MAREKSTDDGGGWKKFLWDSEKKQVLGRTGTS) lie on the Cytoplasmic side of the membrane. The helical; Signal-anchor for type II membrane protein transmembrane segment at 33–53 (WFKIFVFYLIFYGCLAGIFIG) threads the bilayer. The Extracellular portion of the chain corresponds to 54–305 (TIQVMLLTIS…RFEVKIEVKS (252 aa)). Asn-114 carries N-linked (GlcNAc...) asparagine glycosylation. Cys-127 and Cys-150 are joined by a disulfide. Asn-159 carries N-linked (GlcNAc...) asparagine glycosylation. Cys-160 and Cys-176 are oxidised to a cystine. N-linked (GlcNAc...) asparagine glycans are attached at residues Asn-194 and Asn-267. A disulfide bond links Cys-215 and Cys-278.

Belongs to the X(+)/potassium ATPases subunit beta family. The sodium/potassium-transporting ATPase is composed of a catalytic alpha subunit, an auxiliary non-catalytic beta subunit and an additional regulatory subunit.

It is found in the cell membrane. In terms of biological role, this is the non-catalytic component of the active enzyme, which catalyzes the hydrolysis of ATP coupled with the exchange of Na(+) and K(+) ions across the plasma membrane. The beta subunit regulates, through assembly of alpha/beta heterodimers, the number of sodium pumps transported to the plasma membrane. The sequence is that of Sodium/potassium-transporting ATPase subunit beta-1 (atp1b1) from Tetronarce californica (Pacific electric ray).